Here is a 162-residue protein sequence, read N- to C-terminus: NADPH-dependent 7-cyano-7-deazaguanine reductase (162 aa).

Catalysis depends on Cys-53, which acts as the Thioimide intermediate. The active-site Proton donor is the Asp-60. Residues Val-75–Ser-77 and His-94–Glu-95 each bind substrate.

It belongs to the GTP cyclohydrolase I family. QueF type 1 subfamily.

The protein localises to the cytoplasm. The enzyme catalyses 7-aminomethyl-7-carbaguanine + 2 NADP(+) = 7-cyano-7-deazaguanine + 2 NADPH + 3 H(+). The protein operates within tRNA modification; tRNA-queuosine biosynthesis. In terms of biological role, catalyzes the NADPH-dependent reduction of 7-cyano-7-deazaguanine (preQ0) to 7-aminomethyl-7-deazaguanine (preQ1). The chain is NADPH-dependent 7-cyano-7-deazaguanine reductase from Streptococcus mutans serotype c (strain ATCC 700610 / UA159).